The sequence spans 308 residues: Quinolinate synthase (308 aa).

The iminosuccinate site is built by His24 and Ser41. Cys86 contacts [4Fe-4S] cluster. Residues 112-114 (YIN) and Ser129 each bind iminosuccinate. Cys172 contributes to the [4Fe-4S] cluster binding site. Residues 198–200 (HPE) and Thr215 each bind iminosuccinate. Residue Cys265 participates in [4Fe-4S] cluster binding.

Belongs to the quinolinate synthase family. Type 2 subfamily. [4Fe-4S] cluster serves as cofactor.

The protein localises to the cytoplasm. It carries out the reaction iminosuccinate + dihydroxyacetone phosphate = quinolinate + phosphate + 2 H2O + H(+). Its pathway is cofactor biosynthesis; NAD(+) biosynthesis; quinolinate from iminoaspartate: step 1/1. In terms of biological role, catalyzes the condensation of iminoaspartate with dihydroxyacetone phosphate to form quinolinate. This Sulfurihydrogenibium sp. (strain YO3AOP1) protein is Quinolinate synthase.